The following is a 206-amino-acid chain: Small ribosomal subunit protein uS4 (206 aa).

The 61-residue stretch at 96–156 folds into the S4 RNA-binding domain; that stretch reads GRLDNVVYRM…EKAKKQSRVK (61 aa).

Belongs to the universal ribosomal protein uS4 family. In terms of assembly, part of the 30S ribosomal subunit. Contacts protein S5. The interaction surface between S4 and S5 is involved in control of translational fidelity.

Functionally, one of the primary rRNA binding proteins, it binds directly to 16S rRNA where it nucleates assembly of the body of the 30S subunit. In terms of biological role, with S5 and S12 plays an important role in translational accuracy. This Shigella flexneri protein is Small ribosomal subunit protein uS4.